Reading from the N-terminus, the 330-residue chain is L-tryptophan isonitrile synthase AmbI2 (330 aa).

The protein belongs to the isocyanide synthase family.

The catalysed reaction is D-ribulose 5-phosphate + L-tryptophan = (2S)-3-(1H-indol-3-yl)-2-isocyanopropanoate + hydroxyacetone + formaldehyde + phosphate + H2O + H(+). In terms of biological role, involved in the biosynthesis of ambiguines, a family of hapalindole-type alkaloids. Responsible for the synthesis of the isonitrile group on tryptophan using ribulose 5-phosphate as the source of the carbon atom. This is L-tryptophan isonitrile synthase AmbI2 from Fischerella ambigua (strain UTEX 1903).